Here is a 615-residue protein sequence, read N- to C-terminus: Afadin- and alpha-actinin-binding protein (615 aa).

Coiled coils occupy residues 126–227 (KLGS…IAMD) and 266–293 (RQKQ…SLLS). Phosphoserine occurs at positions 290, 293, 313, and 319. The segment at 293 to 316 (SPQKKKPRERAEDGTGTVAISDIE) is disordered. A coiled-coil region spans residues 375–461 (ISRQDHEQET…RSFTEAAIRL (87 aa)). Serine 537, serine 541, and serine 543 each carry phosphoserine. The tract at residues 567–615 (PEESKPSEVARESTDQKWSVQSRPSSREGCYSGCSSAFRSAHGDRDDLP) is disordered. Basic and acidic residues predominate over residues 568 to 581 (EESKPSEVARESTD).

It belongs to the ADIP family. As to quaternary structure, interacts with SSX2 and SSX3. Does not interact with SSX1 and SSX4. Interacts with afadin and alpha-actinin. Interacts with VAV2. Interacts with PCM1. Interacts with WRAP73. In terms of tissue distribution, widely expressed.

It is found in the cell junction. Its subcellular location is the adherens junction. It localises to the nucleus. The protein localises to the cytoplasm. The protein resides in the cytoskeleton. It is found in the microtubule organizing center. Its subcellular location is the centrosome. It localises to the centriolar satellite. The protein localises to the cilium basal body. Functionally, belongs to an adhesion system, which plays a role in the organization of homotypic, interneuronal and heterotypic cell-cell adherens junctions (AJs). May connect the nectin-afadin and E-cadherin-catenin system through alpha-actinin and may be involved in organization of the actin cytoskeleton at AJs through afadin and alpha-actinin. Acts as a centrosome maturation factor, probably by maintaining the integrity of the pericentriolar material and proper microtubule nucleation at mitotic spindle poles. The function seems to implicate at least in part WRAP73; the SSX2IP:WRAP73 complex is proposed to act as regulator of spindle anchoring at the mitotic centrosome. Involved in cell movement: localizes at the leading edge of moving cells in response to PDGF and is required for the formation of the leading edge and the promotion of cell movement, possibly via activation of Rac signaling. Involved in ciliogenesis. It is required for targeted recruitment of the BBSome, CEP290, RAB8, and SSTR3 to the cilia. In Mus musculus (Mouse), this protein is Afadin- and alpha-actinin-binding protein (Ssx2ip).